The primary structure comprises 637 residues: ATP-dependent zinc metalloprotease FtsH (637 aa).

The Cytoplasmic segment spans residues Met-1–Arg-6. The helical transmembrane segment at Ser-7–Ser-27 threads the bilayer. The Periplasmic segment spans residues Asp-28–Thr-103. Residues Phe-104 to Phe-124 form a helical membrane-spanning segment. The Cytoplasmic segment spans residues Met-125–Ser-637. ATP is bound at residue Gly-195–Thr-202. Residue His-417 coordinates Zn(2+). The active site involves Glu-418. Residues His-421 and Asp-495 each coordinate Zn(2+). The tract at residues Glu-603–Ser-637 is disordered. Residues Lys-615–Ser-637 show a composition bias toward basic and acidic residues.

In the central section; belongs to the AAA ATPase family. The protein in the C-terminal section; belongs to the peptidase M41 family. Homohexamer. It depends on Zn(2+) as a cofactor.

Its subcellular location is the cell inner membrane. Functionally, acts as a processive, ATP-dependent zinc metallopeptidase for both cytoplasmic and membrane proteins. Plays a role in the quality control of integral membrane proteins. This is ATP-dependent zinc metalloprotease FtsH from Rickettsia conorii (strain ATCC VR-613 / Malish 7).